The primary structure comprises 164 residues: uncharacterized protein (164 aa).

The next 2 helical transmembrane spans lie at 11-31 and 51-71; these read FYVN…PSLL and CQQY…LVLV.

The protein resides in the membrane. This is an uncharacterized protein from Saccharomyces cerevisiae (strain ATCC 204508 / S288c) (Baker's yeast).